Consider the following 130-residue polypeptide: MAKQSVVKTKKRVKRVITDGVAHICASFNNTIVTITDRQGNSLFWCTSGASGFRGSRKCTPFAAQVAAEKAGRAVLDYGMKSLEVRINGPGPGRESAVRSLSNVGYKITNIIDVTPIPHNGCRPPKKRRV.

It belongs to the universal ribosomal protein uS11 family. As to quaternary structure, part of the 30S ribosomal subunit. Interacts with proteins S7 and S18. Binds to IF-3.

Its function is as follows. Located on the platform of the 30S subunit, it bridges several disparate RNA helices of the 16S rRNA. Forms part of the Shine-Dalgarno cleft in the 70S ribosome. In Xylella fastidiosa (strain M12), this protein is Small ribosomal subunit protein uS11.